Reading from the N-terminus, the 244-residue chain is MWLGDYSLLNLLGIFLQATFIQNILLSTFLGMCSYLACSSRLSTANGLGMSVALVLTITGSINWLVHYFITKPGALAWLSPALANIDLSFLELIMFIVVIAAFTQILEVLLERFSRNLYLALGIFLPLIAVNCAILGGVLFGITRNYPFLPMVVFSLGSGCGWWLAIVLFATIREKLAYSDVPQHLRGTGISFITTGLMAMAFMGLTGIDISKPTTSKPAFVTNIATDSPQPNTHSSSEEPKAS.

The next 6 helical transmembrane spans lie at 11–31 (LLGI…TFLG), 50–70 (MSVA…HYFI), 90–110 (FLEL…LEVL), 123–143 (GIFL…LFGI), 153–173 (VVFS…FATI), and 191–211 (ISFI…GIDI). Over residues 222–236 (VTNIATDSPQPNTHS) the composition is skewed to polar residues. The disordered stretch occupies residues 222 to 244 (VTNIATDSPQPNTHSSSEEPKAS).

It belongs to the NqrDE/RnfAE family. Composed of six subunits; NqrA, NqrB, NqrC, NqrD, NqrE and NqrF.

The protein localises to the cell inner membrane. The enzyme catalyses a ubiquinone + n Na(+)(in) + NADH + H(+) = a ubiquinol + n Na(+)(out) + NAD(+). In terms of biological role, NQR complex catalyzes the reduction of ubiquinone-1 to ubiquinol by two successive reactions, coupled with the transport of Na(+) ions from the cytoplasm to the periplasm. NqrA to NqrE are probably involved in the second step, the conversion of ubisemiquinone to ubiquinol. In Chlamydia trachomatis serovar A (strain ATCC VR-571B / DSM 19440 / HAR-13), this protein is Na(+)-translocating NADH-quinone reductase subunit E.